The chain runs to 127 residues: MAEITKADVISFIENMTVLELAELVKELEDKFGVSAAAPVAVAAAAAPAAAAEAAEEKTEFDVILKSAGANKIGVIKVVRALTGLGLKEAKDLVDGAPKPVKNGVSKEEAEEAKKQLVESGAEVEIK.

Positions 98–127 (PKPVKNGVSKEEAEEAKKQLVESGAEVEIK) are disordered. Positions 105–117 (VSKEEAEEAKKQL) are enriched in basic and acidic residues.

This sequence belongs to the bacterial ribosomal protein bL12 family. As to quaternary structure, homodimer. Part of the ribosomal stalk of the 50S ribosomal subunit. Forms a multimeric L10(L12)X complex, where L10 forms an elongated spine to which 2 to 4 L12 dimers bind in a sequential fashion. Binds GTP-bound translation factors.

Forms part of the ribosomal stalk which helps the ribosome interact with GTP-bound translation factors. Is thus essential for accurate translation. The chain is Large ribosomal subunit protein bL12 from Geobacter sulfurreducens (strain ATCC 51573 / DSM 12127 / PCA).